The sequence spans 435 residues: ATP-dependent protease ATPase subunit HslU (435 aa).

Residues isoleucine 18, 60 to 65 (GVGKTE), aspartate 248, glutamate 313, and arginine 385 contribute to the ATP site.

It belongs to the ClpX chaperone family. HslU subfamily. As to quaternary structure, a double ring-shaped homohexamer of HslV is capped on each side by a ring-shaped HslU homohexamer. The assembly of the HslU/HslV complex is dependent on binding of ATP.

The protein localises to the cytoplasm. ATPase subunit of a proteasome-like degradation complex; this subunit has chaperone activity. The binding of ATP and its subsequent hydrolysis by HslU are essential for unfolding of protein substrates subsequently hydrolyzed by HslV. HslU recognizes the N-terminal part of its protein substrates and unfolds these before they are guided to HslV for hydrolysis. The chain is ATP-dependent protease ATPase subunit HslU from Rhizobium leguminosarum bv. trifolii (strain WSM2304).